The sequence spans 306 residues: uncharacterized protein (306 aa).

Belongs to the asfivirus CP312R family.

It is found in the virion. This is an uncharacterized protein from African swine fever virus (isolate Pig/Kenya/KEN-50/1950) (ASFV).